The sequence spans 367 residues: EGGSTAGLSATPPASLPGSLTNVKALQKSPGPQRERKSSSSSEDRNRMKTLGRRDSSDDWEIPDGQITVGQRIGSGSFGTVYKGKWHGDVAVKMLNVTAPTPQQLQAFKNEVGVLRKTRHVNILLFMGYSTKPQLAIVTQWCEGSSLYHHLHIIETKFEMIKLIDIARQTAQGMDYLHAKSIIHRDLKSNNIFLHEDLTVKIGDFGLATVKSRWSGSHQFEQLSGSILWMAPEVIRMQDKNPYSFQSDVYAFGIVLYELMTGQLPYSNINNRDQIIFMVGRGYLSPDLSKVRSNCPKAMKRLMAECLKKKRDERPLFPQILASIELLARSLPKIHRSASEPSLNRAGFQTEDFSLYACASPKTPIQA.

A disordered region spans residues 1–64 (EGGSTAGLSA…DSSDDWEIPD (64 aa)). Positions 33–57 (QRERKSSSSSEDRNRMKTLGRRDSS) are enriched in basic and acidic residues. The 261-residue stretch at 67–327 (ITVGQRIGSG…PQILASIELL (261 aa)) folds into the Protein kinase domain. ATP-binding positions include 73–81 (IGSGSFGTV) and lysine 93. The active-site Proton acceptor is aspartate 186.

It belongs to the protein kinase superfamily. TKL Ser/Thr protein kinase family. RAF subfamily.

The catalysed reaction is L-seryl-[protein] + ATP = O-phospho-L-seryl-[protein] + ADP + H(+). It catalyses the reaction L-threonyl-[protein] + ATP = O-phospho-L-threonyl-[protein] + ADP + H(+). This chain is Serine/threonine-protein kinase-transforming protein Rmil (V-RMIL), found in Avian retrovirus IC10.